A 601-amino-acid polypeptide reads, in one-letter code: Proline--tRNA ligase (601 aa).

Belongs to the class-II aminoacyl-tRNA synthetase family. ProS type 1 subfamily. As to quaternary structure, homodimer.

It localises to the cytoplasm. It carries out the reaction tRNA(Pro) + L-proline + ATP = L-prolyl-tRNA(Pro) + AMP + diphosphate. Its function is as follows. Catalyzes the attachment of proline to tRNA(Pro) in a two-step reaction: proline is first activated by ATP to form Pro-AMP and then transferred to the acceptor end of tRNA(Pro). As ProRS can inadvertently accommodate and process non-cognate amino acids such as alanine and cysteine, to avoid such errors it has two additional distinct editing activities against alanine. One activity is designated as 'pretransfer' editing and involves the tRNA(Pro)-independent hydrolysis of activated Ala-AMP. The other activity is designated 'posttransfer' editing and involves deacylation of mischarged Ala-tRNA(Pro). The misacylated Cys-tRNA(Pro) is not edited by ProRS. The chain is Proline--tRNA ligase from Tropheryma whipplei (strain TW08/27) (Whipple's bacillus).